The following is a 504-amino-acid chain: Cholesterol 7-alpha-monooxygenase (504 aa).

Cys444 provides a ligand contact to heme.

This sequence belongs to the cytochrome P450 family. It depends on heme as a cofactor.

It localises to the endoplasmic reticulum membrane. It is found in the microsome membrane. The enzyme catalyses cholesterol + reduced [NADPH--hemoprotein reductase] + O2 = 7alpha-hydroxycholesterol + oxidized [NADPH--hemoprotein reductase] + H2O + H(+). It functions in the pathway lipid metabolism; bile acid biosynthesis. In terms of biological role, catalyzes a rate-limiting step in cholesterol catabolism and bile acid biosynthesis by introducing a hydrophilic moiety at position 7 of cholesterol. Important for cholesterol homeostasis. The sequence is that of Cholesterol 7-alpha-monooxygenase (CYP7A1) from Cricetulus griseus (Chinese hamster).